A 644-amino-acid chain; its full sequence is MASDYYSSDDEGFGEKVGLIGEKDRFEAETIHVIEVSQHEADIQKAKQRSLATHEAEKLDLATHEAEQLDLAIQEFSRQEEEEERRRTRELENDAQIANVLQHEERERLINKKTALEDEEDELLARTLEESLKENNRRKMFEEQVNKDEQLALIVQESLNMEEYPIRLEEYKSISRRAPLDVDEQFAKAVKESLKNKGKGKQFEDEQVKKDEQLALIVQESLNMVESPPRLEENNNISTRAPVDEDEQLAKAVEESLKGKGQIKQSKDEVEGDGMLLELNPPPSLCGGCNFAVEHGGSVNILGVLWHPGCFCCRACHKPIAIHDIENHVSNSRGKFHKSCYERYCYVCKEKKMKTYNNHPFWEERYCPVHEADGTPKCCSCERLEPRESNYVMLADGRWLCLECMNSAVMDSDECQPLHFDMRDFFEGLNMKIEKEFPFLLVEKQALNKAEKEEKIDYQYEVVTRGICLSEEQIVDSVSQRPVRGPNNKLVGMATESQKVTRECEVTAILILYGLPRLLTGYILAHEMMHAYLRLNGHRNLNNILEEGICQVLGHLWLDSQTYATADATADASSSASSSSRTPPAASASKKGEWSDFDKKLVEFCKNQIETDDSPVYGLGFRTVNEMVTNSSLQETLKEILRQR.

UIM domains follow at residues 119–138 (EEDE…NNRR), 181–200 (DVDE…KGKG), and 244–263 (DEDE…KGQI). Positions 284-355 (SLCGGCNFAV…YVCKEKKMKT (72 aa)) constitute an LIM zinc-binding domain. Residues 572 to 589 (ASSSASSSSRTPPAASAS) show a composition bias toward low complexity. Residues 572–591 (ASSSASSSSRTPPAASASKK) form a disordered region.

In terms of assembly, interacts with ubiquitin.

Functionally, ubiquitin receptor that probably regulates developmental process. This Arabidopsis thaliana (Mouse-ear cress) protein is Protein DA1-related 6 (DAR6).